Consider the following 144-residue polypeptide: Cell division protein SepF (144 aa).

The segment covering 14–31 has biased composition (acidic residues); sequence EDDEMNEVPYTESEEQQE. Residues 14–41 form a disordered region; that stretch reads EDDEMNEVPYTESEEQQEEIPQTQKNER.

Belongs to the SepF family. Homodimer. Interacts with FtsZ.

It is found in the cytoplasm. Cell division protein that is part of the divisome complex and is recruited early to the Z-ring. Probably stimulates Z-ring formation, perhaps through the cross-linking of FtsZ protofilaments. Its function overlaps with FtsA. The polypeptide is Cell division protein SepF (Lactobacillus johnsonii (strain CNCM I-12250 / La1 / NCC 533)).